Reading from the N-terminus, the 215-residue chain is Polysialic acid O-acetyltransferase (215 aa).

Acetyl-CoA-binding positions include 119–121, arginine 148, lysine 154, serine 166, 171–172, and lysine 190; these read DMH and YK.

This sequence belongs to the transferase hexapeptide repeat family. Homotrimer.

The enzyme catalyses [(2-&gt;6)-alpha-D-glucosyl-(1-&gt;4)-N-acetyl-alpha-D-neuraminosyl](n) + n acetyl-CoA = [(2-&gt;6)-alpha-D-glucosyl-(1-&gt;4)-N,7-O-diacetyl-alpha-D-neuraminosyl](n) + n CoA. It carries out the reaction [(2-&gt;6)-alpha-D-glucosyl-(1-&gt;4)-N-acetyl-alpha-D-neuraminosyl](n) + n acetyl-CoA = [(2-&gt;6)-alpha-D-glucosyl-(1-&gt;4)-N,O(9)-diacetyl-alpha-D-neuraminosyl](n) + n CoA. Catalyzes the O-acetylation of capsular polymeric sialic acid consisting of polymers of (2-&gt;6)-alpha-D-glucosyl-(1-&gt;4)-N-acetyl-alpha-D-neuraminosyl residues. Shows high substrate specificity toward polymers of sialic acid that contains a large number of residues. This chain is Polysialic acid O-acetyltransferase, found in Neisseria meningitidis.